Reading from the N-terminus, the 92-residue chain is MTKRTKKAGIVGKYGTRYGASLRKQIKKMEVSQHSKYFCEFCGKYAVKRKAVGIWGCKACGKVKAGGAYTLNTASAVTVRSTIRRLREQTES.

The C4-type zinc-finger motif lies at 39-60 (CEFCGKYAVKRKAVGIWGCKAC).

It belongs to the eukaryotic ribosomal protein eL43 family.

The polypeptide is Large ribosomal subunit protein eL43 (RPL37A) (Gossypium hirsutum (Upland cotton)).